The sequence spans 255 residues: Small ribosomal subunit protein uS2 (255 aa).

The protein belongs to the universal ribosomal protein uS2 family.

In Streptococcus thermophilus (strain ATCC BAA-491 / LMD-9), this protein is Small ribosomal subunit protein uS2.